A 550-amino-acid chain; its full sequence is Chaperonin GroEL (550 aa).

Residues 30–33, Lys51, 87–91, Gly415, and Asp495 contribute to the ATP site; these read TLGP and DGTTT.

The protein belongs to the chaperonin (HSP60) family. In terms of assembly, forms a cylinder of 14 subunits composed of two heptameric rings stacked back-to-back. Interacts with the co-chaperonin GroES.

The protein resides in the cytoplasm. The enzyme catalyses ATP + H2O + a folded polypeptide = ADP + phosphate + an unfolded polypeptide.. In terms of biological role, together with its co-chaperonin GroES, plays an essential role in assisting protein folding. The GroEL-GroES system forms a nano-cage that allows encapsulation of the non-native substrate proteins and provides a physical environment optimized to promote and accelerate protein folding. The sequence is that of Chaperonin GroEL from Dechloromonas aromatica (strain RCB).